A 510-amino-acid chain; its full sequence is NAD(P)H-quinone oxidoreductase subunit 2 B, chloroplastic (510 aa).

A run of 13 helical transmembrane segments spans residues 24 to 44 (LLFF…GLIL), 57 to 77 (IPWL…ALLF), 99 to 119 (IFQF…VEYI), 124 to 144 (MAIT…MFLC), 149 to 169 (LITI…LSGY), 183 to 203 (YLLM…WLYG), 227 to 247 (PGIS…LSPA), 295 to 315 (WHLL…LIAI), 323 to 343 (MLAY…IVGD), 354 to 374 (YMLF…LFGL), 395 to 415 (ALSL…AGFF), 418 to 438 (LYLF…IGLL), and 484 to 504 (MIVC…IIAI).

Belongs to the complex I subunit 2 family. In terms of assembly, NDH is composed of at least 16 different subunits, 5 of which are encoded in the nucleus.

The protein localises to the plastid. It is found in the chloroplast thylakoid membrane. The enzyme catalyses a plastoquinone + NADH + (n+1) H(+)(in) = a plastoquinol + NAD(+) + n H(+)(out). It catalyses the reaction a plastoquinone + NADPH + (n+1) H(+)(in) = a plastoquinol + NADP(+) + n H(+)(out). NDH shuttles electrons from NAD(P)H:plastoquinone, via FMN and iron-sulfur (Fe-S) centers, to quinones in the photosynthetic chain and possibly in a chloroplast respiratory chain. The immediate electron acceptor for the enzyme in this species is believed to be plastoquinone. Couples the redox reaction to proton translocation, and thus conserves the redox energy in a proton gradient. The protein is NAD(P)H-quinone oxidoreductase subunit 2 B, chloroplastic of Guizotia abyssinica (Niger).